Consider the following 255-residue polypeptide: 5'-nucleotidase SurE (255 aa).

Residues Asp8, Asp9, Ser39, and Asn91 each coordinate a divalent metal cation.

Belongs to the SurE nucleotidase family. The cofactor is a divalent metal cation.

It is found in the cytoplasm. The catalysed reaction is a ribonucleoside 5'-phosphate + H2O = a ribonucleoside + phosphate. Its function is as follows. Nucleotidase that shows phosphatase activity on nucleoside 5'-monophosphates. The sequence is that of 5'-nucleotidase SurE from Nitrosospira multiformis (strain ATCC 25196 / NCIMB 11849 / C 71).